Consider the following 178-residue polypeptide: ATP-dependent protease subunit HslV (178 aa).

Thr-2 is a catalytic residue. Na(+)-binding residues include Gly-157, Cys-160, and Thr-163.

This sequence belongs to the peptidase T1B family. HslV subfamily. As to quaternary structure, a double ring-shaped homohexamer of HslV is capped on each side by a ring-shaped HslU homohexamer. The assembly of the HslU/HslV complex is dependent on binding of ATP.

The protein resides in the cytoplasm. The enzyme catalyses ATP-dependent cleavage of peptide bonds with broad specificity.. Its activity is regulated as follows. Allosterically activated by HslU binding. In terms of biological role, protease subunit of a proteasome-like degradation complex believed to be a general protein degrading machinery. The chain is ATP-dependent protease subunit HslV from Hamiltonella defensa subsp. Acyrthosiphon pisum (strain 5AT).